The chain runs to 426 residues: Mannose-1-phosphate guanyltransferase alpha-B (426 aa).

This sequence belongs to the transferase hexapeptide repeat family.

It carries out the reaction alpha-D-mannose 1-phosphate + GTP + H(+) = GDP-alpha-D-mannose + diphosphate. It participates in nucleotide-sugar biosynthesis; GDP-alpha-D-mannose biosynthesis; GDP-alpha-D-mannose from alpha-D-mannose 1-phosphate (GTP route): step 1/1. This chain is Mannose-1-phosphate guanyltransferase alpha-B (gmppa-b), found in Xenopus laevis (African clawed frog).